The sequence spans 457 residues: Tubulin alpha chain (457 aa).

Residues glutamine 12, glutamate 77, serine 146, glycine 150, threonine 151, threonine 186, asparagine 213, and asparagine 235 each coordinate GTP. Glutamate 77 contributes to the Mg(2+) binding site.

It belongs to the tubulin family. In terms of assembly, dimer of alpha and beta chains. A typical microtubule is a hollow water-filled tube with an outer diameter of 25 nm and an inner diameter of 15 nM. Alpha-beta heterodimers associate head-to-tail to form protofilaments running lengthwise along the microtubule wall with the beta-tubulin subunit facing the microtubule plus end conferring a structural polarity. Microtubules usually have 13 protofilaments but different protofilament numbers can be found in some organisms and specialized cells. Mg(2+) is required as a cofactor. In terms of processing, undergoes a tyrosination/detyrosination cycle, the cyclic removal and re-addition of a C-terminal tyrosine residue by the enzymes tubulin tyrosine carboxypeptidase (TTCP) and tubulin tyrosine ligase (TTL), respectively.

The protein localises to the cytoplasm. It is found in the cytoskeleton. The catalysed reaction is GTP + H2O = GDP + phosphate + H(+). Functionally, tubulin is the major constituent of microtubules, a cylinder consisting of laterally associated linear protofilaments composed of alpha- and beta-tubulin heterodimers. Microtubules grow by the addition of GTP-tubulin dimers to the microtubule end, where a stabilizing cap forms. Below the cap, tubulin dimers are in GDP-bound state, owing to GTPase activity of alpha-tubulin. The protein is Tubulin alpha chain (tubA) of Dictyostelium discoideum (Social amoeba).